Here is a 338-residue protein sequence, read N- to C-terminus: Phosphate acyltransferase (338 aa).

The protein belongs to the PlsX family. Homodimer. Probably interacts with PlsY.

Its subcellular location is the cytoplasm. It catalyses the reaction a fatty acyl-[ACP] + phosphate = an acyl phosphate + holo-[ACP]. It participates in lipid metabolism; phospholipid metabolism. Its function is as follows. Catalyzes the reversible formation of acyl-phosphate (acyl-PO(4)) from acyl-[acyl-carrier-protein] (acyl-ACP). This enzyme utilizes acyl-ACP as fatty acyl donor, but not acyl-CoA. The sequence is that of Phosphate acyltransferase from Endomicrobium trichonymphae.